Reading from the N-terminus, the 408-residue chain is 1-deoxy-D-xylulose 5-phosphate reductoisomerase (408 aa).

Residues Thr19, Gly20, Ser21, Ile22, Gly45, Asn47, and Asn130 each contribute to the NADPH site. Lys131 lines the 1-deoxy-D-xylulose 5-phosphate pocket. Position 132 (Glu132) interacts with NADPH. Asp156 serves as a coordination point for Mn(2+). The 1-deoxy-D-xylulose 5-phosphate site is built by Ser157, Glu158, Ser182, and His205. Glu158 is a binding site for Mn(2+). Residue Gly211 coordinates NADPH. The 1-deoxy-D-xylulose 5-phosphate site is built by Ser218, Asn223, Lys224, and Glu227. Residue Glu227 coordinates Mn(2+).

It belongs to the DXR family. It depends on Mg(2+) as a cofactor. Requires Mn(2+) as cofactor.

It carries out the reaction 2-C-methyl-D-erythritol 4-phosphate + NADP(+) = 1-deoxy-D-xylulose 5-phosphate + NADPH + H(+). Its pathway is isoprenoid biosynthesis; isopentenyl diphosphate biosynthesis via DXP pathway; isopentenyl diphosphate from 1-deoxy-D-xylulose 5-phosphate: step 1/6. Functionally, catalyzes the NADPH-dependent rearrangement and reduction of 1-deoxy-D-xylulose-5-phosphate (DXP) to 2-C-methyl-D-erythritol 4-phosphate (MEP). The polypeptide is 1-deoxy-D-xylulose 5-phosphate reductoisomerase (Gluconobacter oxydans (strain 621H) (Gluconobacter suboxydans)).